A 1042-amino-acid polypeptide reads, in one-letter code: Exosome RNA helicase MTR4 (1042 aa).

At Ala-2 the chain carries N-acetylalanine. The tract at residues 16–74 (DSTTAAGTKKDKEKDKGKWKGPPGSADKAGKRFDGKLQSESTNNGKNKRDVDFEGTDEP) is disordered. Residues 23-33 (TKKDKEKDKGK) are compositionally biased toward basic and acidic residues. Lys-24 is covalently cross-linked (Glycyl lysine isopeptide (Lys-Gly) (interchain with G-Cter in SUMO2)). The residue at position 40 (Ser-40) is a Phosphoserine. Basic and acidic residues predominate over residues 43–52 (KAGKRFDGKL). Residues Lys-51 and Lys-78 each carry the N6-acetyllysine modification. ATP contacts are provided by residues Ile-139, 161–168 (AHTSAGKT), Ser-164, Gly-166, Lys-167, and Thr-168. Residues 148 to 304 (IQCVDNNQSV…WICHLHKQPC (157 aa)) form the Helicase ATP-binding domain. Positions 252–255 (DEIH) match the DEIH box motif. Residue Lys-358 forms a Glycyl lysine isopeptide (Lys-Gly) (interchain with G-Cter in SUMO2) linkage. Positions 405–577 (QMTKLDFNTD…NMVLNLLRVE (173 aa)) constitute a Helicase C-terminal domain. Residues Lys-684 and Lys-723 each participate in a glycyl lysine isopeptide (Lys-Gly) (interchain with G-Cter in SUMO2) cross-link.

The protein belongs to the helicase family. SKI2 subfamily. As to quaternary structure, component of a TRAMP-like complex, an ATP-dependent exosome regulatory complex consisting of a helicase (MTREX), an oligadenylate polymerase (TENT4B or TENT4A), and a substrate specific RNA-binding factor (ZCCHC7 or ZCCHC8). Several TRAMP-like complexes exist with specific compositions and are associated with nuclear, or nucleolar RNA exosomes. Identified in the spliceosome C complex. Component of the poly(A) tail exosome targeting (PAXT) complex made of PABPN1, ZFC3H1 and MTREX that directs a subset of long and polyadenylated poly(A) RNAs for exosomal degradation. Component of the nuclear exosome targeting (NEXT) complex composed of MTREX, ZCCHC8, and RBM7 that directs a subset of non-coding short-lived RNAs for exosomal degradation. Interacts with ZCCHC8; this interaction bridges the interaction between RBM7 and MTREX. Binds to ZFC3H1 and RBM7 in a RNase-insensitive manner. Interacts with EXOSC10; the interaction mediates the association of MTREX with nuclear RNA exosomes. Interacts with isoform 1 of NVL in an ATP-dependent manner; the interaction is required to associate NVL with nuclear RNA exosome. Interacts with WDR74; the interaction dissociation in a late stage of rRNA synthesis is required for appropriate maturation of pre-60S particles and depends on the ATPase activity of NVL. Interacts with MPHOSPH6. Interacts with the RNA cap-binding complex proteins NCBP1 and SRRT. Interacts with NRDE2; the interaction is direct and negatively regulates MTREX function in exosomal degradation by changing its conformation precluding interaction with ZFC3H1, the RNA cap-binding complex proteins NCBP1 and SRRT, and association with the exosome. Associates with the RNA exosome complex.

The protein localises to the nucleus. The protein resides in the nucleoplasm. It localises to the nucleolus. Its subcellular location is the nucleus speckle. The enzyme catalyses ATP + H2O = ADP + phosphate + H(+). Its activity is regulated as follows. Activated when MTREX is incorporated into NEXT complex an the nuclear RNA exosome complex. In terms of biological role, catalyzes the ATP-dependent unwinding of RNA duplexes with a single-stranded 3' RNA extension. Central subunit of many protein complexes, namely TRAMP-like, nuclear exosome targeting (NEXT) and poly(A) tail exosome targeting (PAXT). NEXT functions as an RNA exosome cofactor that directs a subset of non-coding short-lived RNAs for exosomal degradation. NEXT is involved in surveillance and turnover of aberrant transcripts and non-coding RNAs. PAXT directs a subset of long and polyadenylated poly(A) RNAs for exosomal degradation. The RNA exosome is fundamental for the degradation of RNA in eukaryotic nuclei. Substrate targeting is facilitated by its cofactor ZCCHC8, which links to RNA-binding protein adapters. Associated with the RNA exosome complex and involved in the 3'-processing of the 7S pre-RNA to the mature 5.8S rRNA. May be involved in pre-mRNA splicing. In the context of NEXT complex can also in vitro unwind DNA:RNA heteroduplexes with a 3' poly (A) RNA tracking strand. Can promote unwinding and degradation of structured RNA substrates when associated with the nuclear exosome and its cofactors. Can displace a DNA strand while translocating on RNA to ultimately degrade the RNA within a DNA/RNA heteroduplex. Plays a role in DNA damage response. The protein is Exosome RNA helicase MTR4 of Homo sapiens (Human).